Reading from the N-terminus, the 30-residue chain is Small toxic protein BsrE (30 aa).

A helical transmembrane segment spans residues 4–24 (FQALMLMLAIGSFIIALLTYI).

It localises to the cell membrane. Functionally, toxic component of a type I toxin-antitoxin (TA) system; overexpression in the absence of cognate antisense antitoxin SR5 RNA leads to cell lysis. Base pairing occurs between the 3' UTRs of bsrE mRNA and SR5 RNA which leads to bsrE mRNA degradation initiated by RNase III (rnc) and RNase J1 (rnjA). Genetic evidence suggests an unidentified RNA-binding protein may exist that promotes TA RNA interaction. The polypeptide is Small toxic protein BsrE (Bacillus subtilis (strain 168)).